Here is a 353-residue protein sequence, read N- to C-terminus: Mitogen-activated protein kinase FUS3 (353 aa).

One can recognise a Protein kinase domain in the interval 13 to 309 (FQLKSLLGEG…AKEALEHPYL (297 aa)). ATP-binding positions include 19–27 (LGEGAYGVV) and Lys-42. The active-site Proton acceptor is the Asp-137. Thr-180 bears the Phosphothreonine mark. Residues 180-182 (TEY) carry the TXY motif. Tyr-182 is modified (phosphotyrosine). Lys-345 is covalently cross-linked (Glycyl lysine isopeptide (Lys-Gly) (interchain with G-Cter in ubiquitin)).

It belongs to the protein kinase superfamily. CMGC Ser/Thr protein kinase family. MAP kinase subfamily. As to quaternary structure, in the nucleus, FUS3 forms a complex with DIG1, DIG2 and STE12. The interaction of FUS3 with STE12 depends on the presence of both DIG1 and DIG2. STE12 is lost from FUS3/DIG1/DIG2 complex after pheromone treatment. During its activation and phosphorylation, FUS3 forms a membrane-associated complex with the scaffold protein STE5, the MAPKK STE7, the MAPKKK STE11, and the G-protein beta subunit GBB/STE4; interacting directly with STE7 and STE5. It depends on Mg(2+) as a cofactor. Post-translationally, dually phosphorylated on Thr-180 and Tyr-182 by STE7 in response to pheromone induction, which activates the enzyme. Activated FUS3 initiates a feedback signal, down-regulating phosphorylation of both, FUS3 and KSS1.

The protein resides in the nucleus. It is found in the cytoplasm. It localises to the periplasm. The enzyme catalyses L-seryl-[protein] + ATP = O-phospho-L-seryl-[protein] + ADP + H(+). It catalyses the reaction L-threonyl-[protein] + ATP = O-phospho-L-threonyl-[protein] + ADP + H(+). Activated by tyrosine and threonine phosphorylation after pheromone treatment. Together with closely related KSS1, FUS3 is the final kinase in the signal transduction cascade regulating activation/repression of the mating and filamentation pathways, induced by pheromone and nitrogen/carbon limitation, respectively. Phosphorylated FUS3 activates the mating but suppresses the filamentation pathway, whereas activated KSS1 activates both pathways. Pheromone-activated FUS3 functions by inhibiting the binding of the transcriptional activator STE12 to filamentation specific genes while inducing its binding to and activity at mating specific genes. Non-activated FUS3 has a repressive effect on STE12 transcriptional activity. KSS1 can partially compensate for the lack of FUS3 but mating efficiency is reduced and the filamentation program is partially activated upon pheromone signaling. FUS3 phosphorylates STE7, STE5, FAR1, DIG1, DIG2 and STE12. This chain is Mitogen-activated protein kinase FUS3 (FUS3), found in Saccharomyces cerevisiae (strain ATCC 204508 / S288c) (Baker's yeast).